A 248-amino-acid polypeptide reads, in one-letter code: UPF0246 protein RPR_00055 (248 aa).

It belongs to the UPF0246 family.

This is UPF0246 protein RPR_00055 from Rickettsia peacockii (strain Rustic).